Consider the following 227-residue polypeptide: UPF0758 protein CPE2144 (227 aa).

In terms of domain architecture, MPN spans K105–L227. The Zn(2+) site is built by H176, H178, and D189. Residues H176–D189 carry the JAMM motif motif.

The protein belongs to the UPF0758 family.

This is UPF0758 protein CPE2144 from Clostridium perfringens (strain 13 / Type A).